Consider the following 352-residue polypeptide: Phosphate acyltransferase (352 aa).

The protein belongs to the PlsX family. In terms of assembly, homodimer. Probably interacts with PlsY.

It localises to the cytoplasm. It carries out the reaction a fatty acyl-[ACP] + phosphate = an acyl phosphate + holo-[ACP]. The protein operates within lipid metabolism; phospholipid metabolism. Functionally, catalyzes the reversible formation of acyl-phosphate (acyl-PO(4)) from acyl-[acyl-carrier-protein] (acyl-ACP). This enzyme utilizes acyl-ACP as fatty acyl donor, but not acyl-CoA. In Brucella anthropi (strain ATCC 49188 / DSM 6882 / CCUG 24695 / JCM 21032 / LMG 3331 / NBRC 15819 / NCTC 12168 / Alc 37) (Ochrobactrum anthropi), this protein is Phosphate acyltransferase.